We begin with the raw amino-acid sequence, 86 residues long: Small ribosomal subunit protein uS17 (86 aa).

This sequence belongs to the universal ribosomal protein uS17 family. As to quaternary structure, part of the 30S ribosomal subunit.

In terms of biological role, one of the primary rRNA binding proteins, it binds specifically to the 5'-end of 16S ribosomal RNA. This chain is Small ribosomal subunit protein uS17, found in Bifidobacterium longum (strain DJO10A).